Consider the following 315-residue polypeptide: Aspartate carbamoyltransferase catalytic subunit (315 aa).

Residues R65 and T66 each coordinate carbamoyl phosphate. K93 contributes to the L-aspartate binding site. Carbamoyl phosphate-binding residues include R115, H145, and Q148. R179 and R234 together coordinate L-aspartate. Residues G275 and P276 each contribute to the carbamoyl phosphate site.

It belongs to the aspartate/ornithine carbamoyltransferase superfamily. ATCase family. In terms of assembly, heterododecamer (2C3:3R2) of six catalytic PyrB chains organized as two trimers (C3), and six regulatory PyrI chains organized as three dimers (R2).

The enzyme catalyses carbamoyl phosphate + L-aspartate = N-carbamoyl-L-aspartate + phosphate + H(+). It functions in the pathway pyrimidine metabolism; UMP biosynthesis via de novo pathway; (S)-dihydroorotate from bicarbonate: step 2/3. Functionally, catalyzes the condensation of carbamoyl phosphate and aspartate to form carbamoyl aspartate and inorganic phosphate, the committed step in the de novo pyrimidine nucleotide biosynthesis pathway. The sequence is that of Aspartate carbamoyltransferase catalytic subunit from Xanthomonas axonopodis pv. citri (strain 306).